The chain runs to 522 residues: N-acetylgalactosamine-6-sulfatase (522 aa).

The N-terminal stretch at 1–26 (MAAVVAATRWWQLLLVLSAAGMGASG) is a signal peptide. The tract at residues 27–379 (APQPPNILLL…PTLLQGRLMD (353 aa)) is catalytic domain. Ca(2+) contacts are provided by Asp-39, Asp-40, and Cys-79. Cys-79 serves as the catalytic Nucleophile. Cys-79 is subject to 3-oxoalanine (Cys). His-142 is a catalytic residue. Asn-204 carries N-linked (GlcNAc...) asparagine glycosylation. Asp-288 and Asn-289 together coordinate Ca(2+). Cysteines 308 and 419 form a disulfide. Asn-423 is a glycosylation site (N-linked (GlcNAc...) asparagine). Disulfide bonds link Cys-489/Cys-518 and Cys-501/Cys-507.

Belongs to the sulfatase family. Homodimer. The cofactor is Ca(2+). The conversion to 3-oxoalanine (also known as C-formylglycine, FGly), of a serine or cysteine residue in prokaryotes and of a cysteine residue in eukaryotes, is critical for catalytic activity.

It is found in the lysosome. The catalysed reaction is Hydrolysis of the 6-sulfate groups of the N-acetyl-D-galactosamine 6-sulfate units of chondroitin sulfate and of the D-galactose 6-sulfate units of keratan sulfate.. The sequence is that of N-acetylgalactosamine-6-sulfatase (GALNS) from Homo sapiens (Human).